The sequence spans 70 residues: Small ribosomal subunit protein bS21 (70 aa).

Belongs to the bacterial ribosomal protein bS21 family.

This Helicobacter acinonychis (strain Sheeba) protein is Small ribosomal subunit protein bS21.